A 376-amino-acid polypeptide reads, in one-letter code: NAD(P)H-quinone oxidoreductase subunit 1, chloroplastic (376 aa).

The next 9 helical transmembrane spans lie at 27 to 47 (LISIFLPIVLLLVISVLGVLV), 65 to 85 (PEYAGSLGIMQAIVDGVKLLI), 97 to 117 (WLFSIGPVLVVTPVILSYLVV), 130 to 150 (LGIFFWIVISSITPLGLLIAG), 166 to 186 (AAQSISYEIPLTLCVLSISLL), 251 to 271 (GIKFGIFYVASYLNLLVSSLF), 272 to 292 (AVVLYLGGWNFPIPTTLIFFI), 310 to 330 (LIIPIIHISITLAKTYLFIFF), and 353 to 373 (FLLPMAVGNLLLTASFQLTLF).

The protein belongs to the complex I subunit 1 family. NDH is composed of at least 16 different subunits, 5 of which are encoded in the nucleus.

The protein localises to the plastid. It is found in the chloroplast thylakoid membrane. It catalyses the reaction a plastoquinone + NADH + (n+1) H(+)(in) = a plastoquinol + NAD(+) + n H(+)(out). The catalysed reaction is a plastoquinone + NADPH + (n+1) H(+)(in) = a plastoquinol + NADP(+) + n H(+)(out). Its function is as follows. NDH shuttles electrons from NAD(P)H:plastoquinone, via FMN and iron-sulfur (Fe-S) centers, to quinones in the photosynthetic chain and possibly in a chloroplast respiratory chain. The immediate electron acceptor for the enzyme in this species is believed to be plastoquinone. Couples the redox reaction to proton translocation, and thus conserves the redox energy in a proton gradient. This chain is NAD(P)H-quinone oxidoreductase subunit 1, chloroplastic, found in Chara vulgaris (Common stonewort).